We begin with the raw amino-acid sequence, 308 residues long: Snake venom metalloprotease inhibitor 02D01 (308 aa).

Residues 1–23 (MFVSRLAASGLLLLSLLALSLDG) form the signal peptide. The propeptide occupies 24 to 38 (KPLPQRQPHHIQPME). Pyrrolidone carboxylic acid is present on Q39. Residues 42–50 (LAPDAPPLE) constitute a propeptide that is removed on maturation. Q51 carries the pyrrolidone carboxylic acid modification. A propeptide spanning residues 54–62 (LAPDAPPLE) is cleaved from the precursor. Q63 is modified (pyrrolidone carboxylic acid). Positions 66–74 (LAPAAPPLE) are excised as a propeptide. Position 75 is a pyrrolidone carboxylic acid (Q75). The propeptide occupies 78-86 (LAPDAPPME). Position 87 is a pyrrolidone carboxylic acid (Q87). The propeptide occupies 90-98 (LAPDAPPME). A Pyrrolidone carboxylic acid modification is found at Q99. The propeptide occupies 102–110 (LAPDAPPME). Q111 carries the pyrrolidone carboxylic acid modification. A propeptide spanning residues 114 to 122 (LAPDAPPME) is cleaved from the precursor. Q123 is modified (pyrrolidone carboxylic acid). A propeptide spanning residues 126–134 (LAPDAAPLE) is cleaved from the precursor. Q135 is modified (pyrrolidone carboxylic acid). A propeptide spanning residues 138–146 (LAPDAPPME) is cleaved from the precursor. Q147 is subject to Pyrrolidone carboxylic acid. The propeptide occupies 150 to 158 (LAPDAPPME). Pyrrolidone carboxylic acid is present on Q159. The propeptide occupies 162–249 (QPQIPSLMEQ…KQASQKWGRL (88 aa)). Over residues 172-182 (RQLSSGGTTAL) the composition is skewed to polar residues. Disordered stretches follow at residues 172 to 228 (RQLS…AAAT) and 252 to 279 (HDHD…GARR). Residues 198-209 (VVGGGGGGGGGS) show a composition bias toward gly residues. Residues 210-227 (KAALALPKPPKAKGAAAA) are compositionally biased toward low complexity. Positions 265 to 277 (SVGGGGGGGGGGA) are enriched in gly residues. Residues 278–286 (RRLKGLAKK) constitute a propeptide that is removed on maturation. A disulfide bridge connects residues C292 and C308.

In the C-terminal section; belongs to the natriuretic peptide family. The protein in the central section; belongs to the pHpG family. Expressed by the venom gland.

The protein localises to the secreted. PEKW and poly-His-poly-Gly peptides may serve as metalloproteinase inhibitors during glandular storage. Their inhibition may be instantly disengaged, by dilution or physiochemical change, when venom is injected into tissue of the prey. Functionally, has a vasorelaxant activity in rat aortic strips and a diuretic potency in anesthetized rats. May act by activating natriuretic receptors (NPR1 and/or NPR2). In Echis ocellatus (Ocellated saw-scaled viper), this protein is Snake venom metalloprotease inhibitor 02D01.